The following is a 345-amino-acid chain: Protein RecA (345 aa).

65–72 (GPESSGKT) contacts ATP.

Belongs to the RecA family.

Its subcellular location is the cytoplasm. Its function is as follows. Can catalyze the hydrolysis of ATP in the presence of single-stranded DNA, the ATP-dependent uptake of single-stranded DNA by duplex DNA, and the ATP-dependent hybridization of homologous single-stranded DNAs. It interacts with LexA causing its activation and leading to its autocatalytic cleavage. In Sulfurimonas denitrificans (strain ATCC 33889 / DSM 1251) (Thiomicrospira denitrificans (strain ATCC 33889 / DSM 1251)), this protein is Protein RecA.